Consider the following 131-residue polypeptide: QRFP-like peptide (131 aa).

Residues 1 to 25 form the signal peptide; sequence MGVRVMRSRICVIGLLVLMLTQSEA. Residues 26-94 constitute a propeptide that is removed on maturation; it reads YSFREKSWRT…DDGISPADKR (69 aa). Residues 48 to 131 form a disordered region; it reads RRDGGDQAPS…RESRRSFGSD (84 aa). Positions 97-106 are enriched in polar residues; it reads MLQQLAQQLK. At Phe-119 the chain carries Phenylalanine amide. Over residues 120–131 the composition is skewed to basic and acidic residues; the sequence is GKRESRRSFGSD. Residues 123 to 131 constitute a propeptide that is removed on maturation; that stretch reads ESRRSFGSD.

It belongs to the RFamide neuropeptide family.

The protein resides in the secreted. Its function is as follows. Ligand for the G-protein coupled receptor QRFPR. The polypeptide is QRFP-like peptide (Branchiostoma floridae (Florida lancelet)).